A 329-amino-acid chain; its full sequence is Quinone oxidoreductase (329 aa).

Ala2 carries the post-translational modification N-acetylalanine. Residue Lys23 is modified to N6-acetyllysine. NADP(+) contacts are provided by residues Tyr53, 158–161, Gly181, His200, Asn229, 246–249, and 269–271; these read SGGV, VGCR, and VSL. Residue Lys296 is modified to N6-succinyllysine.

It belongs to the zinc-containing alcohol dehydrogenase family. Quinone oxidoreductase subfamily. As to quaternary structure, homotetramer.

Its subcellular location is the cytoplasm. It catalyses the reaction 2 a quinone + NADPH + H(+) = 2 a 1,4-benzosemiquinone + NADP(+). In terms of biological role, does not have alcohol dehydrogenase activity. Binds NADP and acts through a one-electron transfer process. Orthoquinones, such as 1,2-naphthoquinone or 9,10-phenanthrenequinone, are the best substrates (in vitro). May act in the detoxification of xenobiotics. Interacts with (AU)-rich elements (ARE) in the 3'-UTR of target mRNA species and enhances their stability. NADPH binding interferes with mRNA binding. This is Quinone oxidoreductase (Cryz) from Rattus norvegicus (Rat).